We begin with the raw amino-acid sequence, 363 residues long: Neutral protease 2 homolog MEP7 (363 aa).

An N-terminal signal peptide occupies residues 1–19; that stretch reads MLLCSMVAALAALATPAFS. Residues 20–181 constitute a propeptide that is removed on maturation; sequence CALPHLDLPE…ARAIQPLDRR (162 aa). 2 cysteine pairs are disulfide-bonded: Cys-187–Cys-259 and Cys-266–Cys-284. Position 308 (His-308) interacts with Zn(2+). Glu-309 is a catalytic residue. Zn(2+) contacts are provided by His-312 and Asp-323.

Belongs to the peptidase M35 family. The cofactor is Zn(2+).

Its subcellular location is the secreted. The catalysed reaction is Preferential cleavage of bonds with hydrophobic residues in P1'. Also 3-Asn-|-Gln-4 and 8-Gly-|-Ser-9 bonds in insulin B chain.. In terms of biological role, secreted metalloproteinase that allows assimilation of proteinaceous substrates. Shows high activities on basic nuclear substrates such as histone and protamine. May be involved in virulence. This is Neutral protease 2 homolog MEP7 (MEP7) from Coccidioides posadasii (strain C735) (Valley fever fungus).